Reading from the N-terminus, the 161-residue chain is UPF0262 protein Meso_0189 (161 aa).

This sequence belongs to the UPF0262 family.

This is UPF0262 protein Meso_0189 from Chelativorans sp. (strain BNC1).